The sequence spans 254 residues: Phosphoribosylaminoimidazole-succinocarboxamide synthase (254 aa).

Belongs to the SAICAR synthetase family.

It catalyses the reaction 5-amino-1-(5-phospho-D-ribosyl)imidazole-4-carboxylate + L-aspartate + ATP = (2S)-2-[5-amino-1-(5-phospho-beta-D-ribosyl)imidazole-4-carboxamido]succinate + ADP + phosphate + 2 H(+). It participates in purine metabolism; IMP biosynthesis via de novo pathway; 5-amino-1-(5-phospho-D-ribosyl)imidazole-4-carboxamide from 5-amino-1-(5-phospho-D-ribosyl)imidazole-4-carboxylate: step 1/2. The protein is Phosphoribosylaminoimidazole-succinocarboxamide synthase of Brucella canis (strain ATCC 23365 / NCTC 10854 / RM-666).